The following is a 312-amino-acid chain: DNA-directed RNA polymerase subunit alpha (312 aa).

The alpha N-terminal domain (alpha-NTD) stretch occupies residues 1 to 229 (MLQYQIDRIE…ELFQPLATVT (229 aa)). Residues 246–312 (IPLEELNLSV…ISIPQSRTSA (67 aa)) are alpha C-terminal domain (alpha-CTD).

This sequence belongs to the RNA polymerase alpha chain family. In cyanobacteria the RNAP catalytic core is composed of 2 alpha, 1 beta, 1 beta', 1 gamma and 1 omega subunit. When a sigma factor is associated with the core the holoenzyme is formed, which can initiate transcription.

The enzyme catalyses RNA(n) + a ribonucleoside 5'-triphosphate = RNA(n+1) + diphosphate. DNA-dependent RNA polymerase catalyzes the transcription of DNA into RNA using the four ribonucleoside triphosphates as substrates. The polypeptide is DNA-directed RNA polymerase subunit alpha (Parasynechococcus marenigrum (strain WH8102)).